Consider the following 149-residue polypeptide: D-aminoacyl-tRNA deacylase (149 aa).

The short motif at 137–138 (GP) is the Gly-cisPro motif, important for rejection of L-amino acids element.

It belongs to the DTD family. In terms of assembly, homodimer.

The protein localises to the cytoplasm. It carries out the reaction glycyl-tRNA(Ala) + H2O = tRNA(Ala) + glycine + H(+). It catalyses the reaction a D-aminoacyl-tRNA + H2O = a tRNA + a D-alpha-amino acid + H(+). Its function is as follows. An aminoacyl-tRNA editing enzyme that deacylates mischarged D-aminoacyl-tRNAs. Also deacylates mischarged glycyl-tRNA(Ala), protecting cells against glycine mischarging by AlaRS. Acts via tRNA-based rather than protein-based catalysis; rejects L-amino acids rather than detecting D-amino acids in the active site. By recycling D-aminoacyl-tRNA to D-amino acids and free tRNA molecules, this enzyme counteracts the toxicity associated with the formation of D-aminoacyl-tRNA entities in vivo and helps enforce protein L-homochirality. In Thermotoga petrophila (strain ATCC BAA-488 / DSM 13995 / JCM 10881 / RKU-1), this protein is D-aminoacyl-tRNA deacylase.